Here is a 142-residue protein sequence, read N- to C-terminus: 3-hydroxyacyl-[acyl-carrier-protein] dehydratase FabZ (142 aa).

The active site involves histidine 50.

The protein belongs to the thioester dehydratase family. FabZ subfamily.

The protein localises to the cytoplasm. The enzyme catalyses a (3R)-hydroxyacyl-[ACP] = a (2E)-enoyl-[ACP] + H2O. In terms of biological role, involved in unsaturated fatty acids biosynthesis. Catalyzes the dehydration of short chain beta-hydroxyacyl-ACPs and long chain saturated and unsaturated beta-hydroxyacyl-ACPs. The chain is 3-hydroxyacyl-[acyl-carrier-protein] dehydratase FabZ from Clostridium tetani (strain Massachusetts / E88).